We begin with the raw amino-acid sequence, 172 residues long: Large ribosomal subunit protein uL10 (172 aa).

Belongs to the universal ribosomal protein uL10 family. In terms of assembly, part of the ribosomal stalk of the 50S ribosomal subunit. The N-terminus interacts with L11 and the large rRNA to form the base of the stalk. The C-terminus forms an elongated spine to which L12 dimers bind in a sequential fashion forming a multimeric L10(L12)X complex.

Forms part of the ribosomal stalk, playing a central role in the interaction of the ribosome with GTP-bound translation factors. The sequence is that of Large ribosomal subunit protein uL10 from Bartonella henselae (strain ATCC 49882 / DSM 28221 / CCUG 30454 / Houston 1) (Rochalimaea henselae).